The following is a 299-amino-acid chain: NAD kinase (299 aa).

Asp-71 acts as the Proton acceptor in catalysis. NAD(+) is bound by residues 71–72 (DG), 145–146 (ND), Arg-173, Asp-175, 186–191 (TAYALS), Ala-210, and Gln-248.

Belongs to the NAD kinase family. A divalent metal cation is required as a cofactor.

Its subcellular location is the cytoplasm. It catalyses the reaction NAD(+) + ATP = ADP + NADP(+) + H(+). Involved in the regulation of the intracellular balance of NAD and NADP, and is a key enzyme in the biosynthesis of NADP. Catalyzes specifically the phosphorylation on 2'-hydroxyl of the adenosine moiety of NAD to yield NADP. This chain is NAD kinase, found in Bordetella avium (strain 197N).